Here is a 368-residue protein sequence, read N- to C-terminus: Peptide chain release factor 2 (368 aa).

The residue at position 250 (Q250) is an N5-methylglutamine.

Belongs to the prokaryotic/mitochondrial release factor family. In terms of processing, methylated by PrmC. Methylation increases the termination efficiency of RF2.

The protein resides in the cytoplasm. Peptide chain release factor 2 directs the termination of translation in response to the peptide chain termination codons UGA and UAA. This chain is Peptide chain release factor 2, found in Mycolicibacterium smegmatis (strain ATCC 700084 / mc(2)155) (Mycobacterium smegmatis).